Here is a 185-residue protein sequence, read N- to C-terminus: Ribosome-recycling factor (185 aa).

It belongs to the RRF family.

It localises to the cytoplasm. In terms of biological role, responsible for the release of ribosomes from messenger RNA at the termination of protein biosynthesis. May increase the efficiency of translation by recycling ribosomes from one round of translation to another. In Listeria monocytogenes serotype 4a (strain HCC23), this protein is Ribosome-recycling factor.